The chain runs to 792 residues: Receptor-like protein 54 (792 aa).

Residues 1-21 (MKSNLAVFFITCFFCCVFVTS) form the signal peptide. Residues 22–758 (DSVYTLPFPF…PKQEHALNWK (737 aa)) lie on the Extracellular side of the membrane. N-linked (GlcNAc...) asparagine glycosylation is found at Asn68 and Asn107. LRR repeat units lie at residues 114 to 137 (QHLRYLDLSENHFDSSPIPSGFGR), 139 to 162 (TYLESLDLSKNGFIGEVPSSISNL), 163 to 187 (SRLTNLDLSYNKLTGGIPNLHSLTL), 189 to 209 (ENIDLSYNKFSGAIPSYLFTM), 211 to 233 (FLVSLNLRQNHLSDPLENINYSA), 235 to 258 (SKLLILDMAYNLMSHRILEPISKL), 259 to 282 (ANLIQIDLSFQKTPYTFNFDFLLF), 283 to 302 (KSLVRLDLSGNSVSVVGTGS), 303 to 324 (ENLTHLDLSSCNITEFPMFIKD), 325 to 349 (LQRLWWLDISNNRIKGKVPELLWTL), 351 to 374 (SMLHVNLSRNSFDSLEGTPKIILN), and 375 to 399 (SSISELDLSSNAFKGSFPIIPPYVN). N-linked (GlcNAc...) asparagine glycosylation occurs at Asn161. An N-linked (GlcNAc...) asparagine glycan is attached at Asn230. Asn304 and Asn314 each carry an N-linked (GlcNAc...) asparagine glycan. N-linked (GlcNAc...) asparagine glycosylation is found at Asn356 and Asn374. The stretch at 400 to 418 (IMAASNNYFTGGIPLIFCK) is one LRR 13; degenerate repeat. LRR repeat units lie at residues 419-443 (RYRLSLLDLSNNNFSGTIPRCLTNV), 444-470 (SLGLEALKLSNNSLTGRLPDIEDRLVL), 472-489 (DVGHNQISGKLPRSLVNC), and 490-515 (TTLKFLNVEGNHINDTFPFWLKALTR). N-linked (GlcNAc...) asparagine glycosylation is found at Asn431, Asn442, Asn454, Asn488, and Asn503. Residues 516–536 (LEIIVLRSNRFHGPISSPEVS) form an LRR 18; degenerate repeat. 5 LRR repeats span residues 539 to 563 (FTALRIIDISRNSFNGSLPQNYFAN), 614 to 637 (DTYTSIDFSGNSFEGQIPESIGDL), 638 to 661 (KSLIVLDLSNNSFTGRIPSSLAKL), 662 to 685 (KQLESLDLSQNRISGNIPQELREL), and 687 to 709 (FLGYVNMSHNRLTGQIPQSTQVG). N-linked (GlcNAc...) asparagine glycosylation is found at Asn553 and Asn563. Asn647 carries N-linked (GlcNAc...) asparagine glycosylation. Asn692 carries N-linked (GlcNAc...) asparagine glycosylation. Residues 759-779 (AAAIGYGPGVLFGLAIGQAFA) traverse the membrane as a helical segment. Topologically, residues 780 to 792 (RYKPVLFYKLFRL) are cytoplasmic.

Belongs to the RLP family.

The protein resides in the cell membrane. This is Receptor-like protein 54 from Arabidopsis thaliana (Mouse-ear cress).